We begin with the raw amino-acid sequence, 211 residues long: Large ribosomal subunit protein uL3 (211 aa).

The interval 122–157 is disordered; the sequence is NQKRNNFGRGPMSHGSKNHRAPGSIGAGTTPGRVYP.

This sequence belongs to the universal ribosomal protein uL3 family. Part of the 50S ribosomal subunit. Forms a cluster with proteins L14 and L19.

In terms of biological role, one of the primary rRNA binding proteins, it binds directly near the 3'-end of the 23S rRNA, where it nucleates assembly of the 50S subunit. The protein is Large ribosomal subunit protein uL3 of Trichormus variabilis (strain ATCC 29413 / PCC 7937) (Anabaena variabilis).